A 544-amino-acid chain; its full sequence is CTP synthase (544 aa).

Residues 1–265 (MTKFIFVTGG…DNIITEQLQL (265 aa)) are amidoligase domain. Ser-13 contributes to the CTP binding site. Ser-13 contacts UTP. Residues 14–19 (SLGKGI) and Asp-71 contribute to the ATP site. The Mg(2+) site is built by Asp-71 and Glu-139. Residues 146-148 (DIE), 186-191 (KTKPTQ), and Lys-222 contribute to the CTP site. UTP-binding positions include 186–191 (KTKPTQ) and Lys-222. Residues 290–544 (KIAMVGKYVD…VKAALNNKKA (255 aa)) enclose the Glutamine amidotransferase type-1 domain. Gly-353 is an L-glutamine binding site. Residue Cys-380 is the Nucleophile; for glutamine hydrolysis of the active site. Residues 381 to 384 (LGMQ), Glu-404, and Arg-471 contribute to the L-glutamine site. Residues His-517 and Glu-519 contribute to the active site.

The protein belongs to the CTP synthase family. As to quaternary structure, homotetramer.

The enzyme catalyses UTP + L-glutamine + ATP + H2O = CTP + L-glutamate + ADP + phosphate + 2 H(+). It carries out the reaction L-glutamine + H2O = L-glutamate + NH4(+). It catalyses the reaction UTP + NH4(+) + ATP = CTP + ADP + phosphate + 2 H(+). It functions in the pathway pyrimidine metabolism; CTP biosynthesis via de novo pathway; CTP from UDP: step 2/2. Allosterically activated by GTP, when glutamine is the substrate; GTP has no effect on the reaction when ammonia is the substrate. The allosteric effector GTP functions by stabilizing the protein conformation that binds the tetrahedral intermediate(s) formed during glutamine hydrolysis. Inhibited by the product CTP, via allosteric rather than competitive inhibition. Functionally, catalyzes the ATP-dependent amination of UTP to CTP with either L-glutamine or ammonia as the source of nitrogen. Regulates intracellular CTP levels through interactions with the four ribonucleotide triphosphates. The protein is CTP synthase of Neisseria meningitidis serogroup C (strain 053442).